The chain runs to 142 residues: MSTYFPKGEVARKWFVVDADGQTLGRLASRVARILSGKDNPKYTPFIDTGDHVVVINAEKIKITGLKADNKKYYHYSGYPGGMKEEEFLKRLERRPELILETAIKGMLPKSKLGKAMGGKLKVYRGADHPHIAQKPEVLANA.

Belongs to the universal ribosomal protein uL13 family. Part of the 50S ribosomal subunit.

In terms of biological role, this protein is one of the early assembly proteins of the 50S ribosomal subunit, although it is not seen to bind rRNA by itself. It is important during the early stages of 50S assembly. This Koribacter versatilis (strain Ellin345) protein is Large ribosomal subunit protein uL13.